The sequence spans 395 residues: Elongation factor Tu (395 aa).

Residues 10 to 204 form the tr-type G domain; the sequence is KPHVNIGTIG…AVDEYIPTPQ (195 aa). Residues 19–26 are G1; the sequence is GHVDHGKT. 19 to 26 provides a ligand contact to GTP; it reads GHVDHGKT. Residue Thr26 participates in Mg(2+) binding. The segment at 60 to 64 is G2; that stretch reads GITIS. The G3 stretch occupies residues 81–84; that stretch reads DCPG. Residues 81 to 85 and 136 to 139 contribute to the GTP site; these read DCPGH and NKCD. The G4 stretch occupies residues 136 to 139; that stretch reads NKCD. Positions 174–176 are G5; sequence SAL.

The protein belongs to the TRAFAC class translation factor GTPase superfamily. Classic translation factor GTPase family. EF-Tu/EF-1A subfamily. In terms of assembly, monomer.

The protein localises to the cytoplasm. It carries out the reaction GTP + H2O = GDP + phosphate + H(+). Functionally, GTP hydrolase that promotes the GTP-dependent binding of aminoacyl-tRNA to the A-site of ribosomes during protein biosynthesis. This is Elongation factor Tu from Geobacillus stearothermophilus (Bacillus stearothermophilus).